Consider the following 662-residue polypeptide: UvrABC system protein B (662 aa).

A Helicase ATP-binding domain is found at 25-412; sequence EGVRRGYRYQ…SEQVVEQLIR (388 aa). An ATP-binding site is contributed by 38-45; sequence GVTGSGKT. The short motif at 91–114 is the Beta-hairpin element; sequence YYDYYQPEAYVPETDTYIEKDASI. The region spanning 429–595 is the Helicase C-terminal domain; it reads QVDDLIAEIR…TVVKGVRDVI (167 aa). The 36-residue stretch at 620–655 folds into the UVR domain; that stretch reads KSTIEQLEKEMRQAAIELQFEKAAKLRDMILELRKQ.

Belongs to the UvrB family. Forms a heterotetramer with UvrA during the search for lesions. Interacts with UvrC in an incision complex.

It is found in the cytoplasm. The UvrABC repair system catalyzes the recognition and processing of DNA lesions. A damage recognition complex composed of 2 UvrA and 2 UvrB subunits scans DNA for abnormalities. Upon binding of the UvrA(2)B(2) complex to a putative damaged site, the DNA wraps around one UvrB monomer. DNA wrap is dependent on ATP binding by UvrB and probably causes local melting of the DNA helix, facilitating insertion of UvrB beta-hairpin between the DNA strands. Then UvrB probes one DNA strand for the presence of a lesion. If a lesion is found the UvrA subunits dissociate and the UvrB-DNA preincision complex is formed. This complex is subsequently bound by UvrC and the second UvrB is released. If no lesion is found, the DNA wraps around the other UvrB subunit that will check the other stand for damage. The chain is UvrABC system protein B from Caldanaerobacter subterraneus subsp. tengcongensis (strain DSM 15242 / JCM 11007 / NBRC 100824 / MB4) (Thermoanaerobacter tengcongensis).